The following is a 366-amino-acid chain: MGEQPIFSTRAHVFQIDPNTKKNWVPTSKHAVTVSYFYDSTRNVYRIISLDGSKAIINSTITPNMTFTKTSQKFGQWADSRANTVYGLGFSSEHHLSKFAEKFQEFKEAARLAKEKSQEKMELTSTPSQESAGGDLQSPLTPESINGTDDERTPDVTQNSEPRAEPAQNALPFSHSAGDRTQGLSHASSAISKHWEAELATLKGNNAKLTAALLESTANVKQWKQQLAAYQEEAERLHKRVTELECVSSQANAVHSHKTELSQTVQELEETLKVKEEEIERLKQEIDNARELQEQRDSLTQKLQEVEIRNKDLEGQLSELEQRLEKSQSEQDAFRSNLKTLLEILDGKIFELTELRDNLAKLLECS.

The WH1 domain occupies 1–110 (MGEQPIFSTR…EKFQEFKEAA (110 aa)). The residue at position 2 (Gly-2) is an N-acetylglycine. The interval 114–189 (KEKSQEKMEL…RTQGLSHASS (76 aa)) is disordered. Polar residues predominate over residues 138 to 147 (SPLTPESING). Residues 193–364 (KHWEAELATL…LRDNLAKLLE (172 aa)) adopt a coiled-coil conformation. Residues 302–366 (KLQEVEIRNK…DNLAKLLECS (65 aa)) form a required for tetramerization region. Ser-318 carries the post-translational modification Phosphoserine.

The protein belongs to the Homer family. In terms of assembly, tetramer; this tetrameric structure is critical for forming the high-order complex with SHANK1, which in turn is necessary for the structural and functional integrity of dendritic spines. Interacts with GRM1, GRM5, ITPR1, DYN3, RYR1, RYR2 and SHANK3. Interacts with IFT57 and OPHN1. Isoform 1 and isoform 2 encode coiled-coil structures that mediate homo- and heteromultimerization. Interacts with SHANK1; forms high-order polymerized complex with a mesh-like network structure, at least composed of SHANK1, HOMER1 and DLGAP1; the complex formation is SHANK1 multimerization dependent. Interacts with NFATC4. Interacts with DAGLA (via PPXXF motif); this interaction is required for the cell membrane localization of DAGLA. Interacts with SRGAP2. As to expression, highly expressed in cortex, Purkinje cells of the cerebellum, hippocampus, striatum and olfactory bulb. Isoform 1 and isoform 3 are expressed in skeletal and cardiac muscle.

The protein localises to the cytoplasm. The protein resides in the postsynaptic density. It is found in the synapse. It localises to the cell projection. Its subcellular location is the dendritic spine. Postsynaptic density scaffolding protein. Binds and cross-links cytoplasmic regions of GRM1, GRM5, ITPR1, DNM3, RYR1, RYR2, SHANK1 and SHANK3. By physically linking GRM1 and GRM5 with ER-associated ITPR1 receptors, it aids the coupling of surface receptors to intracellular calcium release. May also couple GRM1 to PI3 kinase through its interaction with AGAP2. Differentially regulates the functions of the calcium activated channel ryanodine receptors RYR1 and RYR2. Isoform 1 decreases the activity of RYR2, and increases the activity of RYR1, whereas isoform 3 counteracts the effects by competing for binding sites. Isoform 1 regulates the trafficking and surface expression of GRM5. Isoform 3 acts as a natural dominant negative, in dynamic competition with constitutively expressed isoform 1, and isoform 2 to regulate synaptic metabotropic glutamate function. Isoform 3, may be involved in the structural changes that occur at synapses during long-lasting neuronal plasticity and development. Forms a high-order complex with SHANK1, which in turn is necessary for the structural and functional integrity of dendritic spines. Negatively regulates T cell activation by inhibiting the calcineurin-NFAT pathway. Acts by competing with calcineurin/PPP3CA for NFAT protein binding, hence preventing NFAT activation by PPP3CA. The chain is Homer protein homolog 1 from Rattus norvegicus (Rat).